A 261-amino-acid polypeptide reads, in one-letter code: Aquaporin-8 (261 aa).

Residues Met1–Gln36 lie on the Cytoplasmic side of the membrane. The helical transmembrane segment at Pro37–Ile57 threads the bilayer. Cys53 carries the cysteine persulfide modification. Position 53 is a cysteine sulfenic acid (-SOH) (Cys53). The Extracellular portion of the chain corresponds to Glu58–Gly84. The chain crosses the membrane as a helical span at residues Asn85 to Leu105. Positions Asn92–Ala94 match the NPA 1 motif. Residues Lys106–Thr107 are Cytoplasmic-facing. The helical transmembrane segment at Met108–Ala128 threads the bilayer. Over Lys129 to Glu156 the chain is Extracellular. A glycan (N-linked (GlcNAc...) asparagine) is linked at Asn139. A helical membrane pass occupies residues Ala157 to Val177. Residues Asn178–Gly183 lie on the Cytoplasmic side of the membrane. Residues Pro184 to Ile204 form a helical membrane-spanning segment. The Extracellular portion of the chain corresponds to Ser205–Trp228. The short motif at Asn210–Ala212 is the NPA 2 element. A helical membrane pass occupies residues Ile229 to Ile249. The Cytoplasmic portion of the chain corresponds to Gly250–Arg261.

This sequence belongs to the MIP/aquaporin (TC 1.A.8) family. Post-translationally, sulfenylation at Cys-53(C53-SOH) when hydrogen peroxide flows through the AQP8 channel, making it susceptible to hydrogen sulfide produced by CBS. Persulfidation at Cys-53 is required to gate AQP8 channel; under stress condition, hydrogen peroxide accumulates in the cell leading to CBS activation that produces hydrogen sulfide inducing persulfidation of oxidized Cys-53 (C53-SOH). In terms of processing, N-glycosylated. In terms of tissue distribution, expressed in placenta. Highly expressed in the epithelial layer of gall-bladders. Expressed in heart, kidney, submandibular gland, liver, small intestine, colon, testes, and epididymis. In testes, expressed in spermatogenic cells.

Its subcellular location is the cell membrane. The protein resides in the mitochondrion inner membrane. It is found in the apical cell membrane. It localises to the basolateral cell membrane. The protein localises to the smooth endoplasmic reticulum membrane. It catalyses the reaction H2O(in) = H2O(out). It carries out the reaction urea(in) = urea(out). The catalysed reaction is NH4(+)(in) = NH4(+)(out). The enzyme catalyses H2O2(out) = H2O2(in). It catalyses the reaction formamide(out) = formamide(in). It carries out the reaction methylamine(out) = methylamine(in). Its activity is regulated as follows. Reversibly gated by a two-step sulfenylation-persulfidation process in cells undergoing diverse stresses. Its function is as follows. Channel that allows the facilitated permeation of water and uncharged molecules, such as hydrogen peroxide and the neutral form of ammonia (NH3), through cellular membranes such as plasma membrane, inner mitochondrial membrane and endoplasmic reticulum membrane of several tissues. The transport of ammonia neutral form induces a parallel transport of proton, at alkaline pH when the concentration of ammonia is high. However, it is unclear whether the transport of proton takes place via the aquaporin or via an endogenous pathway. Also, may transport ammonia analogs such as formamide and methylamine, a transport favourited at basic pH due to the increase of unprotonated (neutral) form, which is expected to favor diffusion. In vitro, may be also permeable to urea but not to glycerol. Does not transport urea or glycerol. The water transport mechanism is mercury- and copper-sensitive and passive in response to osmotic driving forces. At the canicular plasma membrane, mediates the osmotic transport of water toward the bile canaliculus and facilitates the cAMP-induced bile canalicular water secretion, a process involved in bile formation. In addition, mediates the hydrogen peroxide release from hepatocyte mitochondria that modulates the SREBF2-mediated cholesterol synthesis and facilitates the mitochondrial ammonia uptake which is metabolized into urea, mainly under glucagon stimulation. In B cells, transports the CYBB-generated hydrogen peroxide from the external leaflet of the plasma membrane to the cytosol to promote B cell activation and differentiation for signal amplification. In the small intestine and colon system, mediates water transport through mitochondria and apical membrane of epithelial cells. May play an important role in the adaptive response of proximal tubule cells to acidosis possibly facilitating mitochondrial ammonia transport. The polypeptide is Aquaporin-8 (Mus musculus (Mouse)).